A 688-amino-acid chain; its full sequence is DNA ligase (688 aa).

Residues 51-55 (DSEYD), 100-101 (SL), and E129 each bind NAD(+). K131 (N6-AMP-lysine intermediate) is an active-site residue. NAD(+) contacts are provided by R152, E189, K308, and K332. C426, C429, C444, and C450 together coordinate Zn(2+). The BRCT domain maps to 609 to 688 (ADEQPLKGQT…DELLALLANS (80 aa)).

The protein belongs to the NAD-dependent DNA ligase family. LigA subfamily. Mg(2+) serves as cofactor. Mn(2+) is required as a cofactor.

It catalyses the reaction NAD(+) + (deoxyribonucleotide)n-3'-hydroxyl + 5'-phospho-(deoxyribonucleotide)m = (deoxyribonucleotide)n+m + AMP + beta-nicotinamide D-nucleotide.. Functionally, DNA ligase that catalyzes the formation of phosphodiester linkages between 5'-phosphoryl and 3'-hydroxyl groups in double-stranded DNA using NAD as a coenzyme and as the energy source for the reaction. It is essential for DNA replication and repair of damaged DNA. This is DNA ligase from Shewanella sp. (strain MR-7).